Consider the following 449-residue polypeptide: Na(+)-translocating NADH-quinone reductase subunit A (449 aa).

The protein belongs to the NqrA family. As to quaternary structure, composed of six subunits; NqrA, NqrB, NqrC, NqrD, NqrE and NqrF.

It catalyses the reaction a ubiquinone + n Na(+)(in) + NADH + H(+) = a ubiquinol + n Na(+)(out) + NAD(+). Functionally, NQR complex catalyzes the reduction of ubiquinone-1 to ubiquinol by two successive reactions, coupled with the transport of Na(+) ions from the cytoplasm to the periplasm. NqrA to NqrE are probably involved in the second step, the conversion of ubisemiquinone to ubiquinol. The polypeptide is Na(+)-translocating NADH-quinone reductase subunit A (Actinobacillus pleuropneumoniae serotype 5b (strain L20)).